Consider the following 139-residue polypeptide: Protein archease (139 aa).

Residues Asp12, Asp138, and Ile139 each contribute to the Ca(2+) site.

It belongs to the archease family.

In terms of biological role, activates the tRNA-splicing ligase complex by facilitating the enzymatic turnover of catalytic subunit RtcB. Acts by promoting the guanylylation of RtcB, a key intermediate step in tRNA ligation. Can also alter the NTP specificity of RtcB such that ATP, dGTP or ITP is used efficiently. This chain is Protein archease, found in Saccharolobus islandicus (strain Y.N.15.51 / Yellowstone #2) (Sulfolobus islandicus).